We begin with the raw amino-acid sequence, 896 residues long: DNA double-strand break repair Rad50 ATPase (896 aa).

ATP is bound by residues 32–38 and Gln137; that span reads NGAGKSS. Coiled-coil stretches lie at residues 200–274, 412–505, 580–611, 636–669, and 702–731; these read RRYQ…KLQE, EEIR…LISM, IGDIEALRKQKDEVSKKLKDAEDRTHEIESEF, IKLAEDLKRQRETLREKVKDLRSRSAGMDEIQKR, and RSKVETLRSHVSEIEQRISDRERDIERMKK. Residues 411–507 enclose the Zinc-hook domain; that stretch reads YEEIRRDIDE…KKRQLISMES (97 aa). Zn(2+) is bound by residues Cys455 and Cys458.

This sequence belongs to the SMC family. RAD50 subfamily. As to quaternary structure, homodimer. Forms a heterotetramer composed of two Mre11 subunits and two Rad50 subunits. Zn(2+) serves as cofactor.

Part of the Rad50/Mre11 complex, which is involved in the early steps of DNA double-strand break (DSB) repair. The complex may facilitate opening of the processed DNA ends to aid in the recruitment of HerA and NurA. Rad50 controls the balance between DNA end bridging and DNA resection via ATP-dependent structural rearrangements of the Rad50/Mre11 complex. This is DNA double-strand break repair Rad50 ATPase from Thermoplasma acidophilum (strain ATCC 25905 / DSM 1728 / JCM 9062 / NBRC 15155 / AMRC-C165).